The sequence spans 422 residues: MFALCDVNAFYASCETVFRPDLWGKPVVVLSNNDGCVIARNAEAKALGVKMGDPWFKQKDLFRRCGVVCFSSNYELYADMSNRVMSTLEELSPRVEIYSIDEAFCDLTGVRNCRDLTDFGREIRATVLQRTHLTVGVGIAQTKTLAKLANHAAKKWQRQTGGVVDLSNLERQRKLMSALPVDDVWGIGRRISKKLDAMGIKTVLDLADTDIRFIRKHFNVVLERTVRELRGEPCLQLEEFAPTKQEIICSRSFGERITDYPSMRQAICSYAARAAEKLRSEHQYCRFISTFIKTSPFALNEPYYGNSASVKLLTPTQDSRDIINAATRSLDAIWQAGHRYQKAGVMLGDFFSQGVAQLNLFDDNAPRPGSEQLMTVMDTLNAKEGRGTLYFAGQGIQQQWQMKRAMLSPRYTTRSSDLLRVK.

Residues 2-188 (FALCDVNAFY…LPVDDVWGIG (187 aa)) enclose the UmuC domain.

Belongs to the DNA polymerase type-Y family.

Functionally, involved in UV protection and mutation. Poorly processive, error-prone DNA polymerase involved in translesion repair. Essential for induced (or SOS) mutagenesis. Able to replicate DNA across DNA lesions (thymine photodimers and abasic sites, translesion synthesis) in the presence of activated RecA; efficiency is maximal in the presence of the beta sliding-clamp and clamp-loading complex of DNA polymerase III plus single-stranded binding protein (SSB). RecA and to a lesser extent the beta clamp-complex may target Pol V to replication complexes stalled at DNA template lesions. The polypeptide is Protein UmuC (umuC) (Escherichia coli (strain K12)).